The chain runs to 229 residues: 2-C-methyl-D-erythritol 4-phosphate cytidylyltransferase (229 aa).

It belongs to the IspD/TarI cytidylyltransferase family. IspD subfamily.

The catalysed reaction is 2-C-methyl-D-erythritol 4-phosphate + CTP + H(+) = 4-CDP-2-C-methyl-D-erythritol + diphosphate. The protein operates within isoprenoid biosynthesis; isopentenyl diphosphate biosynthesis via DXP pathway; isopentenyl diphosphate from 1-deoxy-D-xylulose 5-phosphate: step 2/6. Functionally, catalyzes the formation of 4-diphosphocytidyl-2-C-methyl-D-erythritol from CTP and 2-C-methyl-D-erythritol 4-phosphate (MEP). The chain is 2-C-methyl-D-erythritol 4-phosphate cytidylyltransferase from Neisseria meningitidis serogroup A / serotype 4A (strain DSM 15465 / Z2491).